Consider the following 262-residue polypeptide: Cytochrome c oxidase subunit 3 (262 aa).

6 helical membrane passes run 39–59 (YDISLFVLGNIITILTVYQWW), 83–103 (GMILFILSEVLFFVSFFWAFF), 120–140 (MGIISFNPFQIPLLNTAILLA), 163–183 (GLFFTVLLGIYFTILQAYEYI), 198–218 (FFMATGFHGIHVLIGTTFLLV), and 240–260 (AWYWHFVDVVWLFLYITIYWW).

It belongs to the cytochrome c oxidase subunit 3 family. In terms of assembly, component of the cytochrome c oxidase (complex IV, CIV), a multisubunit enzyme composed of a catalytic core of 3 subunits and several supernumerary subunits. The complex exists as a monomer or a dimer and forms supercomplexes (SCs) in the inner mitochondrial membrane with ubiquinol-cytochrome c oxidoreductase (cytochrome b-c1 complex, complex III, CIII).

It is found in the mitochondrion inner membrane. The catalysed reaction is 4 Fe(II)-[cytochrome c] + O2 + 8 H(+)(in) = 4 Fe(III)-[cytochrome c] + 2 H2O + 4 H(+)(out). Functionally, component of the cytochrome c oxidase, the last enzyme in the mitochondrial electron transport chain which drives oxidative phosphorylation. The respiratory chain contains 3 multisubunit complexes succinate dehydrogenase (complex II, CII), ubiquinol-cytochrome c oxidoreductase (cytochrome b-c1 complex, complex III, CIII) and cytochrome c oxidase (complex IV, CIV), that cooperate to transfer electrons derived from NADH and succinate to molecular oxygen, creating an electrochemical gradient over the inner membrane that drives transmembrane transport and the ATP synthase. Cytochrome c oxidase is the component of the respiratory chain that catalyzes the reduction of oxygen to water. Electrons originating from reduced cytochrome c in the intermembrane space (IMS) are transferred via the dinuclear copper A center (CU(A)) of subunit 2 and heme A of subunit 1 to the active site in subunit 1, a binuclear center (BNC) formed by heme A3 and copper B (CU(B)). The BNC reduces molecular oxygen to 2 water molecules using 4 electrons from cytochrome c in the IMS and 4 protons from the mitochondrial matrix. The sequence is that of Cytochrome c oxidase subunit 3 (mt:CoIII) from Drosophila melanogaster (Fruit fly).